The primary structure comprises 387 residues: uncharacterized protein (387 aa).

This is an uncharacterized protein from Escherichia coli (strain K12).